A 440-amino-acid chain; its full sequence is tRNA modification GTPase MnmE (440 aa).

3 residues coordinate (6S)-5-formyl-5,6,7,8-tetrahydrofolate: arginine 22, glutamate 79, and lysine 118. In terms of domain architecture, TrmE-type G spans 214 to 366 (GLIFTILGKP…LKTMLEAEAR (153 aa)). Residues 224-229 (NAGKSS), 243-249 (SSQPGTT), and 268-271 (DTAG) each bind GTP. Residues serine 228 and threonine 249 each coordinate Mg(2+). Lysine 440 provides a ligand contact to (6S)-5-formyl-5,6,7,8-tetrahydrofolate.

The protein belongs to the TRAFAC class TrmE-Era-EngA-EngB-Septin-like GTPase superfamily. TrmE GTPase family. As to quaternary structure, homodimer. Heterotetramer of two MnmE and two MnmG subunits. K(+) serves as cofactor.

The protein localises to the cytoplasm. Its function is as follows. Exhibits a very high intrinsic GTPase hydrolysis rate. Involved in the addition of a carboxymethylaminomethyl (cmnm) group at the wobble position (U34) of certain tRNAs, forming tRNA-cmnm(5)s(2)U34. This Granulibacter bethesdensis (strain ATCC BAA-1260 / CGDNIH1) protein is tRNA modification GTPase MnmE.